Reading from the N-terminus, the 864-residue chain is Eukaryotic translation initiation factor 3 subunit C (864 aa).

The segment at 1–77 is disordered; the sequence is MSRFFARGGS…EESEDEERVT (77 aa). Positions 14–54 are enriched in acidic residues; the sequence is SSSEDEQELYSDREEEEQFSDSEEESSEAESSEEESSDDEG. The PCI domain maps to 602–776; the sequence is FHMHINLELL…NAIVFRKGVE (175 aa). Positions 815-864 are disordered; sequence RDQGAGARGGRGAGRGGQARGGPRFPGGQQGRRPGGQQFSGGALGGAIKA. Positions 820-864 are enriched in gly residues; that stretch reads GARGGRGAGRGGQARGGPRFPGGQQGRRPGGQQFSGGALGGAIKA.

It belongs to the eIF-3 subunit C family. In terms of assembly, component of the eukaryotic translation initiation factor 3 (eIF-3) complex.

Its subcellular location is the cytoplasm. Its function is as follows. Component of the eukaryotic translation initiation factor 3 (eIF-3) complex, which is involved in protein synthesis of a specialized repertoire of mRNAs and, together with other initiation factors, stimulates binding of mRNA and methionyl-tRNAi to the 40S ribosome. The eIF-3 complex specifically targets and initiates translation of a subset of mRNAs involved in cell proliferation. This is Eukaryotic translation initiation factor 3 subunit C (nip1) from Aspergillus terreus (strain NIH 2624 / FGSC A1156).